A 235-amino-acid chain; its full sequence is Carboxymethylenebutenolidase 2 (235 aa).

Catalysis depends on residues cysteine 117, aspartate 173, and histidine 204.

It belongs to the dienelactone hydrolase family. In terms of assembly, monomer.

It catalyses the reaction 2-(5-oxo-2,5-dihydrofuran-2-ylidene)acetate + H2O = 4-oxohex-2-enedioate + H(+). It functions in the pathway aromatic compound metabolism; 3-chlorocatechol degradation. In terms of biological role, ring cleavage of cyclic ester dienelactone to produce maleylacetate. This is Carboxymethylenebutenolidase 2 (tfdEII) from Cupriavidus pinatubonensis (strain JMP 134 / LMG 1197) (Cupriavidus necator (strain JMP 134)).